Reading from the N-terminus, the 644-residue chain is Exoribonuclease 2 (644 aa).

One can recognise an RNB domain in the interval Arg-189–Lys-516. Residues Asp-561–Val-643 enclose the S1 motif domain.

Belongs to the RNR ribonuclease family. RNase II subfamily.

It localises to the cytoplasm. It carries out the reaction Exonucleolytic cleavage in the 3'- to 5'-direction to yield nucleoside 5'-phosphates.. In terms of biological role, involved in mRNA degradation. Hydrolyzes single-stranded polyribonucleotides processively in the 3' to 5' direction. This Escherichia coli (strain SMS-3-5 / SECEC) protein is Exoribonuclease 2.